The sequence spans 218 residues: Kappa-scoloptoxin(11)-Ssd1b (218 aa).

The signal sequence occupies residues 1–16 (MFYSHLLFFTFTFACS). Positions 17-25 (SSLNRKTKR) are excised as a propeptide.

Post-translationally, contains 8 disulfide bonds. Expressed by the venom gland.

Its subcellular location is the secreted. Functionally, voltage-gated potassium channel inhibitor. The polypeptide is Kappa-scoloptoxin(11)-Ssd1b (Scolopendra dehaani (Thai centipede)).